A 102-amino-acid polypeptide reads, in one-letter code: Large ribosomal subunit protein bL21 (102 aa).

It belongs to the bacterial ribosomal protein bL21 family. As to quaternary structure, part of the 50S ribosomal subunit. Contacts protein L20.

Its function is as follows. This protein binds to 23S rRNA in the presence of protein L20. In Leifsonia xyli subsp. xyli (strain CTCB07), this protein is Large ribosomal subunit protein bL21.